A 169-amino-acid polypeptide reads, in one-letter code: Putative tRNA (cytidine(34)-2'-O)-methyltransferase (169 aa).

Positions 79, 104, 125, and 133 each coordinate S-adenosyl-L-methionine.

It belongs to the class IV-like SAM-binding methyltransferase superfamily. RNA methyltransferase TrmH family. TrmL subfamily.

The protein localises to the cytoplasm. It carries out the reaction cytidine(34) in tRNA + S-adenosyl-L-methionine = 2'-O-methylcytidine(34) in tRNA + S-adenosyl-L-homocysteine + H(+). The catalysed reaction is 5-carboxymethylaminomethyluridine(34) in tRNA(Leu) + S-adenosyl-L-methionine = 5-carboxymethylaminomethyl-2'-O-methyluridine(34) in tRNA(Leu) + S-adenosyl-L-homocysteine + H(+). Functionally, could methylate the ribose at the nucleotide 34 wobble position in tRNA. The sequence is that of Putative tRNA (cytidine(34)-2'-O)-methyltransferase from Listeria innocua serovar 6a (strain ATCC BAA-680 / CLIP 11262).